Here is a 232-residue protein sequence, read N- to C-terminus: Esterase YpfH (232 aa).

Active-site charge relay system residues include S111, D159, and H191.

The protein belongs to the AB hydrolase superfamily. AB hydrolase 2 family.

Functionally, displays esterase activity toward palmitoyl-CoA and pNP-butyrate. The protein is Esterase YpfH (ypfH) of Escherichia coli (strain K12).